The sequence spans 37 residues: Photosystem I reaction center subunit IX (37 aa).

The chain crosses the membrane as a helical span at residues F4–I24.

Belongs to the PsaJ family.

The protein resides in the cellular thylakoid membrane. May help in the organization of the PsaE and PsaF subunits. The polypeptide is Photosystem I reaction center subunit IX (Synechococcus sp. (strain WH7803)).